The chain runs to 801 residues: Phenylalanine--tRNA ligase beta subunit (801 aa).

The tRNA-binding domain maps to 39–153 (AEGLSKLVVG…EGAIPGDSIF (115 aa)). The 76-residue stretch at 406 to 481 (TEPVEVSTTL…RIYGYEKLPT (76 aa)) folds into the B5 domain. Mg(2+) contacts are provided by Asp459, Asp465, Glu468, and Glu469. In terms of domain architecture, FDX-ACB spans 708-801 (TKYPSVSRDI…LVEKVNAEIR (94 aa)).

It belongs to the phenylalanyl-tRNA synthetase beta subunit family. Type 1 subfamily. In terms of assembly, tetramer of two alpha and two beta subunits. Mg(2+) is required as a cofactor.

The protein localises to the cytoplasm. The catalysed reaction is tRNA(Phe) + L-phenylalanine + ATP = L-phenylalanyl-tRNA(Phe) + AMP + diphosphate + H(+). This chain is Phenylalanine--tRNA ligase beta subunit, found in Streptococcus agalactiae serotype Ia (strain ATCC 27591 / A909 / CDC SS700).